A 549-amino-acid polypeptide reads, in one-letter code: MAGGAVIENLSNRKLFVIFAGLLVIQIMFFLIGAWYAPSPSSYMEFEMITCRDETKGLSGEWIHRDNCQQISELSEYTPSSFDLREIVFIAKMPHTRDGIELEYSPWFQFLLGVLHVDVEYSEHFKYVAHAPLELEVRMGYRDKESKKNEWKELVTSNVTRILECTIAEDEKKAGGTYDCDMLDLFELGSSSYPFYLINIRIPINQQACQFDNKSANCQIGKLTGLRLIEIHQNGGFTLVWLWTKTFMTPVVAICLWWYYNRINQLARNPLLLERAILLLGLSLVILDFPIEWISLTYRIPFLLLISDLRQGLFYTVLFSFWLIFAGEHLIDDNTRNNLKSYRFNLSFIITASLGLLIYDLIERGIQLYDPFYSVWSSPTGSQIAYFAIFISAISTVAYFIFLFFKIARVWSTIKSKRSAQIYQTSENRRLKVEGVIYRFKFLMLFTLLCSAFTIAAYFMKQYGEAQLHGDEARDGFLTGSTSAFFTGAFGMCNIYVLLLLAMYAPSHKHYRGASQLIDENDDDEIMEDPSNQHTESNAMTTFLKPSTD.

Positions 1–34 (MAGGAVIENLSNRKLFVIFAGLLVIQIMFFLIGA) are cleaved as a signal peptide. Residues 36 to 236 (YAPSPSSYME…RLIEIHQNGG (201 aa)) are Lumenal-facing. The chain crosses the membrane as a helical span at residues 237–257 (FTLVWLWTKTFMTPVVAICLW). The Cytoplasmic portion of the chain corresponds to 258-275 (WYYNRINQLARNPLLLER). A helical transmembrane segment spans residues 276-296 (AILLLGLSLVILDFPIEWISL). The Lumenal portion of the chain corresponds to 297-310 (TYRIPFLLLISDLR). The helical transmembrane segment at 311–331 (QGLFYTVLFSFWLIFAGEHLI) threads the bilayer. Residues 332–345 (DDNTRNNLKSYRFN) are Cytoplasmic-facing. A helical membrane pass occupies residues 346 to 366 (LSFIITASLGLLIYDLIERGI). At 367 to 383 (QLYDPFYSVWSSPTGSQ) the chain is on the lumenal side. A helical membrane pass occupies residues 384–404 (IAYFAIFISAISTVAYFIFLF). The Cytoplasmic portion of the chain corresponds to 405-439 (FKIARVWSTIKSKRSAQIYQTSENRRLKVEGVIYR). The chain crosses the membrane as a helical span at residues 440–460 (FKFLMLFTLLCSAFTIAAYFM). The Lumenal portion of the chain corresponds to 461–483 (KQYGEAQLHGDEARDGFLTGSTS). The helical transmembrane segment at 484–504 (AFFTGAFGMCNIYVLLLLAMY) threads the bilayer. Residues 505 to 549 (APSHKHYRGASQLIDENDDDEIMEDPSNQHTESNAMTTFLKPSTD) lie on the Cytoplasmic side of the membrane. A disordered region spans residues 524 to 549 (DEIMEDPSNQHTESNAMTTFLKPSTD). Polar residues predominate over residues 530-549 (PSNQHTESNAMTTFLKPSTD).

Belongs to the wntless family. Expressed in the tail hypodermis, stomatointestinal muscle, the mesoblast cell M and its descendants, CAN neurons, the developing vulva, the pharynx and the pharyngeal intestinal valve.

It is found in the cell membrane. Its subcellular location is the early endosome membrane. It localises to the golgi apparatus membrane. The protein resides in the basal cell membrane. The protein localises to the late endosome membrane. In terms of biological role, probable sorting receptor which regulates endocytosis and secretion of the wnt ligand egl-20. Recycling of mig-14 from the plasma membrane to the Golgi apparatus by the retromer complex is essential for its function. Its endosomal trafficking is regulated by its association with sorting nexin snx-3 on early endosomes and the mtm-6/mtm-9 myotubularin complex. Required in embryonic development for endoderm specification and the correct positioning and orientation of the mitotic spindles and division planes in blastomere cells. Functions during vulval development, playing a role in vulval precursor cell fate specification. During development, specifically regulates the migration of HSN neurons, the left Q neuroblast (QL) and its descendants and the distal tip cells of the gonads. Positioning of Q neuroblasts may be both dependent and independent of hox gene mab-5. Involved in establishing ALM and PLM neuronal cell polarity. This chain is Protein wntless homolog, found in Caenorhabditis elegans.